Consider the following 947-residue polypeptide: Translation initiation factor IF-2 (947 aa).

Residues 61-284 are disordered; that stretch reads IQANQPAKNP…TAKNNKSHKI (224 aa). A compositionally biased stretch (basic and acidic residues) spans 151 to 169; sequence QIEKAKQKLQEIQKSREAL. The segment covering 175-188 has biased composition (low complexity); the sequence is SNANNANSTNNANN. Positions 189 to 206 are enriched in basic and acidic residues; the sequence is AKKEISEVKKQEQEIKRH. The span at 207 to 218 shows a compositional bias: basic residues; it reads ENIKRRTGFRVI. Basic and acidic residues predominate over residues 247–262; sequence EDIKKEWQEKDKQEAK. The 170-residue stretch at 446 to 615 folds into the tr-type G domain; the sequence is ERPPVVTIMG…LIQADIMELK (170 aa). Residues 455–462 form a G1 region; the sequence is GHVDHGKT. Residue 455–462 coordinates GTP; sequence GHVDHGKT. Residues 480–484 form a G2 region; sequence GITQH. The segment at 501–504 is G3; it reads DTPG. GTP-binding positions include 501-505 and 555-558; these read DTPGH and NKMD. The interval 555-558 is G4; sequence NKMD. The interval 591-593 is G5; sequence SAK.

Belongs to the TRAFAC class translation factor GTPase superfamily. Classic translation factor GTPase family. IF-2 subfamily.

The protein resides in the cytoplasm. Its function is as follows. One of the essential components for the initiation of protein synthesis. Protects formylmethionyl-tRNA from spontaneous hydrolysis and promotes its binding to the 30S ribosomal subunits. Also involved in the hydrolysis of GTP during the formation of the 70S ribosomal complex. In Helicobacter pylori (strain P12), this protein is Translation initiation factor IF-2.